The chain runs to 457 residues: Polygalacturonase-2 (457 aa).

A signal peptide spans 1-24 (MVIQRNSILLLIIIFASSISTCRS). The propeptide occupies 25 to 71 (NVIDDNLFKQVYDNILEQEFAHDFQAYLSYLSKNIESNNNIDKVDKN). Residues N189 and N240 are each glycosylated (N-linked (GlcNAc...) asparagine). 2 PbH1 repeats span residues 228-255 (SCTN…HVSN) and 256-277 (TQYI…SIVS). Catalysis depends on D270, which acts as the Proton donor. N286 carries N-linked (GlcNAc...) asparagine glycosylation. The active site involves H293. PbH1 repeat units lie at residues 309-330 (VSNV…RIKT) and 338-359 (ASNI…IIDQ). N311 carries N-linked (GlcNAc...) asparagine glycosylation. Residues 445-457 (LEISEDEALLYNY) constitute a propeptide that is removed on maturation.

It belongs to the glycosyl hydrolase 28 family. Monomer PG2 (isoenzymes PG2A and PG2B). Also forms heterodimers called polygalacturonase 1 (PG1) with the beta subunit GP1. In terms of processing, N-glycosylated. PG2B isozyme has a greater degree of glycosylation than PG2A. In terms of tissue distribution, expressed only in ripening fruits (at protein level).

The protein resides in the secreted. It localises to the extracellular space. The protein localises to the apoplast. Its subcellular location is the cell wall. The enzyme catalyses (1,4-alpha-D-galacturonosyl)n+m + H2O = (1,4-alpha-D-galacturonosyl)n + (1,4-alpha-D-galacturonosyl)m.. Functionally, catalytic subunit of the polygalacturonase isozyme 1 and 2 (PG1 and PG2). Acts in concert with the pectinesterase, in the ripening process. Is involved in cell wall metabolism, specifically in polyuronide degradation. The depolymerization and solubilization of cell wall polyuronides mediated by PG2 during ripening seems to be limited by the beta subunit GP1, probably by recruiting PG2 to form PG1. The polypeptide is Polygalacturonase-2 (PG2) (Solanum lycopersicum (Tomato)).